The primary structure comprises 491 residues: UDP-N-acetylmuramate--L-alanine ligase (491 aa).

Residue 126–132 (GTHGKTT) coordinates ATP.

It belongs to the MurCDEF family.

The protein resides in the cytoplasm. The catalysed reaction is UDP-N-acetyl-alpha-D-muramate + L-alanine + ATP = UDP-N-acetyl-alpha-D-muramoyl-L-alanine + ADP + phosphate + H(+). It participates in cell wall biogenesis; peptidoglycan biosynthesis. Functionally, cell wall formation. The polypeptide is UDP-N-acetylmuramate--L-alanine ligase (Salmonella paratyphi C (strain RKS4594)).